An 81-amino-acid polypeptide reads, in one-letter code: Large ribosomal subunit protein bL31 (81 aa).

This sequence belongs to the bacterial ribosomal protein bL31 family. Type A subfamily. As to quaternary structure, part of the 50S ribosomal subunit.

Functionally, binds the 23S rRNA. The chain is Large ribosomal subunit protein bL31 from Synechocystis sp. (strain ATCC 27184 / PCC 6803 / Kazusa).